We begin with the raw amino-acid sequence, 89 residues long: Small ribosomal subunit protein uS17A (89 aa).

The protein belongs to the universal ribosomal protein uS17 family. Part of the 30S ribosomal subunit.

In terms of biological role, one of the primary rRNA binding proteins, it binds specifically to the 5'-end of 16S ribosomal RNA. The chain is Small ribosomal subunit protein uS17A from Bacteroides thetaiotaomicron (strain ATCC 29148 / DSM 2079 / JCM 5827 / CCUG 10774 / NCTC 10582 / VPI-5482 / E50).